The following is a 572-amino-acid chain: Pentatricopeptide repeat-containing protein At5g15010, mitochondrial (572 aa).

Residues 1-57 (MRGIFLIRSRLSIFRAPAVKCLRFSNVLPSLSNNCIVRLYMEPPVACVLPLGLCSMF) constitute a mitochondrion transit peptide. PPR repeat units follow at residues 160-194 (SVRE…SPSL), 196-230 (NSQT…KLEM), 231-261 (GIDD…NKDK), 265-300 (DAKS…GVKH), 301-335 (DVVS…CIEP), 336-371 (DRKV…GIEP), 372-406 (NVVT…GLFP), 412-438 (HAFM…GCEP), 439-473 (TVET…TVGP), and 474-508 (DLSS…GMRP).

It belongs to the PPR family. P subfamily.

The protein localises to the mitochondrion. This is Pentatricopeptide repeat-containing protein At5g15010, mitochondrial from Arabidopsis thaliana (Mouse-ear cress).